A 1200-amino-acid polypeptide reads, in one-letter code: Nuclear pore complex protein Nup133 (1200 aa).

Positions 1–28 (MERNLQKQLYGISRESSPGARRYSMPAA) are disordered.

This sequence belongs to the nucleoporin Nup133 family. As to quaternary structure, forms part of the Nup107-Nup160 subcomplex in the nuclear pore.

The protein resides in the nucleus. Its subcellular location is the nuclear pore complex. Its function is as follows. Probable component of the nuclear pore complex (NPC). Plays a role in NPC assembly and/or maintenance. The chain is Nuclear pore complex protein Nup133 from Drosophila melanogaster (Fruit fly).